A 138-amino-acid chain; its full sequence is Large ribosomal subunit protein uL16 (138 aa).

Residues 1 to 16 (MLIPRRVKHRKQHHPG) show a composition bias toward basic residues. A disordered region spans residues 1 to 24 (MLIPRRVKHRKQHHPGRSGAATGG).

The protein belongs to the universal ribosomal protein uL16 family. In terms of assembly, part of the 50S ribosomal subunit.

Binds 23S rRNA and is also seen to make contacts with the A and possibly P site tRNAs. The protein is Large ribosomal subunit protein uL16 of Arthrobacter sp. (strain FB24).